The following is a 253-amino-acid chain: DNA repair protein RecO (253 aa).

Belongs to the RecO family.

In terms of biological role, involved in DNA repair and RecF pathway recombination. This is DNA repair protein RecO from Staphylococcus epidermidis (strain ATCC 35984 / DSM 28319 / BCRC 17069 / CCUG 31568 / BM 3577 / RP62A).